The sequence spans 35 residues: Cupiennin-2d (35 aa).

A Glutamine amide modification is found at Gln35.

Expressed by the venom gland.

Its subcellular location is the secreted. This is Cupiennin-2d from Cupiennius salei (American wandering spider).